Consider the following 265-residue polypeptide: 3-methyl-2-oxobutanoate hydroxymethyltransferase (265 aa).

The Mg(2+) site is built by D45 and D84. 3-methyl-2-oxobutanoate-binding positions include 45–46 (DS), D84, and K112. Position 114 (E114) interacts with Mg(2+). Residue E181 is the Proton acceptor of the active site.

It belongs to the PanB family. In terms of assembly, homodecamer; pentamer of dimers. It depends on Mg(2+) as a cofactor.

The protein resides in the cytoplasm. It catalyses the reaction 3-methyl-2-oxobutanoate + (6R)-5,10-methylene-5,6,7,8-tetrahydrofolate + H2O = 2-dehydropantoate + (6S)-5,6,7,8-tetrahydrofolate. The protein operates within cofactor biosynthesis; (R)-pantothenate biosynthesis; (R)-pantoate from 3-methyl-2-oxobutanoate: step 1/2. Catalyzes the reversible reaction in which hydroxymethyl group from 5,10-methylenetetrahydrofolate is transferred onto alpha-ketoisovalerate to form ketopantoate. This chain is 3-methyl-2-oxobutanoate hydroxymethyltransferase, found in Yersinia pseudotuberculosis serotype O:1b (strain IP 31758).